The sequence spans 697 residues: Elongation factor G 2 (697 aa).

The region spanning serine 5–threonine 280 is the tr-type G domain. GTP-binding positions include alanine 14 to threonine 21, aspartate 78 to histidine 82, and asparagine 132 to aspartate 135.

This sequence belongs to the TRAFAC class translation factor GTPase superfamily. Classic translation factor GTPase family. EF-G/EF-2 subfamily.

The protein localises to the cytoplasm. In terms of biological role, catalyzes the GTP-dependent ribosomal translocation step during translation elongation. During this step, the ribosome changes from the pre-translocational (PRE) to the post-translocational (POST) state as the newly formed A-site-bound peptidyl-tRNA and P-site-bound deacylated tRNA move to the P and E sites, respectively. Catalyzes the coordinated movement of the two tRNA molecules, the mRNA and conformational changes in the ribosome. This Saccharophagus degradans (strain 2-40 / ATCC 43961 / DSM 17024) protein is Elongation factor G 2.